Consider the following 101-residue polypeptide: Urease subunit beta (101 aa).

This sequence belongs to the urease beta subunit family. Heterotrimer of UreA (gamma), UreB (beta) and UreC (alpha) subunits. Three heterotrimers associate to form the active enzyme.

Its subcellular location is the cytoplasm. The catalysed reaction is urea + 2 H2O + H(+) = hydrogencarbonate + 2 NH4(+). The protein operates within nitrogen metabolism; urea degradation; CO(2) and NH(3) from urea (urease route): step 1/1. This Ruegeria sp. (strain TM1040) (Silicibacter sp.) protein is Urease subunit beta.